A 236-amino-acid chain; its full sequence is 2-C-methyl-D-erythritol 4-phosphate cytidylyltransferase (236 aa).

It belongs to the IspD/TarI cytidylyltransferase family. IspD subfamily. As to quaternary structure, homodimer.

The catalysed reaction is 2-C-methyl-D-erythritol 4-phosphate + CTP + H(+) = 4-CDP-2-C-methyl-D-erythritol + diphosphate. It functions in the pathway isoprenoid biosynthesis; isopentenyl diphosphate biosynthesis via DXP pathway; isopentenyl diphosphate from 1-deoxy-D-xylulose 5-phosphate: step 2/6. In terms of biological role, catalyzes the formation of 4-diphosphocytidyl-2-C-methyl-D-erythritol from CTP and 2-C-methyl-D-erythritol 4-phosphate (MEP). This chain is 2-C-methyl-D-erythritol 4-phosphate cytidylyltransferase, found in Escherichia coli O45:K1 (strain S88 / ExPEC).